Consider the following 31-residue polypeptide: Unknown protein from spot 104 of 2D-PAGE of thylakoid (31 aa).

Its subcellular location is the plastid. It is found in the chloroplast thylakoid. The chain is Unknown protein from spot 104 of 2D-PAGE of thylakoid from Pisum sativum (Garden pea).